The primary structure comprises 161 residues: Regulator of ribonuclease activity A (161 aa).

It belongs to the RraA family. Homotrimer. Binds to both RNA-binding sites in the C-terminal region of Rne and to RhlB.

It localises to the cytoplasm. In terms of biological role, globally modulates RNA abundance by binding to RNase E (Rne) and regulating its endonucleolytic activity. Can modulate Rne action in a substrate-dependent manner by altering the composition of the degradosome. Modulates RNA-binding and helicase activities of the degradosome. This is Regulator of ribonuclease activity A from Shigella boydii serotype 18 (strain CDC 3083-94 / BS512).